We begin with the raw amino-acid sequence, 252 residues long: Imidazole glycerol phosphate synthase subunit HisF (252 aa).

Residues D11 and D130 contribute to the active site.

The protein belongs to the HisA/HisF family. As to quaternary structure, heterodimer of HisH and HisF.

It is found in the cytoplasm. It catalyses the reaction 5-[(5-phospho-1-deoxy-D-ribulos-1-ylimino)methylamino]-1-(5-phospho-beta-D-ribosyl)imidazole-4-carboxamide + L-glutamine = D-erythro-1-(imidazol-4-yl)glycerol 3-phosphate + 5-amino-1-(5-phospho-beta-D-ribosyl)imidazole-4-carboxamide + L-glutamate + H(+). It participates in amino-acid biosynthesis; L-histidine biosynthesis; L-histidine from 5-phospho-alpha-D-ribose 1-diphosphate: step 5/9. In terms of biological role, IGPS catalyzes the conversion of PRFAR and glutamine to IGP, AICAR and glutamate. The HisF subunit catalyzes the cyclization activity that produces IGP and AICAR from PRFAR using the ammonia provided by the HisH subunit. This chain is Imidazole glycerol phosphate synthase subunit HisF, found in Bacillus pumilus (strain SAFR-032).